We begin with the raw amino-acid sequence, 510 residues long: UDP-N-acetylmuramoylalanine--D-glutamate ligase (510 aa).

138 to 144 (GTNGKTT) serves as a coordination point for ATP. Residues 294–316 (FDEPAPAPRRKKDAPPPTRAGGR) form a disordered region.

It belongs to the MurCDEF family.

It is found in the cytoplasm. It catalyses the reaction UDP-N-acetyl-alpha-D-muramoyl-L-alanine + D-glutamate + ATP = UDP-N-acetyl-alpha-D-muramoyl-L-alanyl-D-glutamate + ADP + phosphate + H(+). It participates in cell wall biogenesis; peptidoglycan biosynthesis. Cell wall formation. Catalyzes the addition of glutamate to the nucleotide precursor UDP-N-acetylmuramoyl-L-alanine (UMA). This Bordetella bronchiseptica (strain ATCC BAA-588 / NCTC 13252 / RB50) (Alcaligenes bronchisepticus) protein is UDP-N-acetylmuramoylalanine--D-glutamate ligase.